Reading from the N-terminus, the 214-residue chain is Large ribosomal subunit protein uL4 (214 aa).

Positions 43-83 (RRQAGTHKAKSRSEVNRTTKKSIKQKGSGGARHGSRNAPIF) are disordered.

It belongs to the universal ribosomal protein uL4 family. Part of the 50S ribosomal subunit.

One of the primary rRNA binding proteins, this protein initially binds near the 5'-end of the 23S rRNA. It is important during the early stages of 50S assembly. It makes multiple contacts with different domains of the 23S rRNA in the assembled 50S subunit and ribosome. Functionally, forms part of the polypeptide exit tunnel. The protein is Large ribosomal subunit protein uL4 of Hyphomonas neptunium (strain ATCC 15444).